The following is a 102-amino-acid chain: Small ribosomal subunit protein uS10 (102 aa).

Belongs to the universal ribosomal protein uS10 family. As to quaternary structure, part of the 30S ribosomal subunit.

Functionally, involved in the binding of tRNA to the ribosomes. The polypeptide is Small ribosomal subunit protein uS10 (Methanoculleus marisnigri (strain ATCC 35101 / DSM 1498 / JR1)).